Consider the following 152-residue polypeptide: MKVWVDADACPGVTKETLFRAADRAEIETILIANHSVRIPPSRFIKMVTVSSGFDVADDEIVKRLTAGDLVITADIPLAAEVIEKGGLALNPRGELYTEQNIKSILNMRDFMDTMRASGVQTGGPAAMSQSERQAFANQLDRLITKFKQQKK.

The protein belongs to the UPF0178 family.

The protein is UPF0178 protein swp_1285 of Shewanella piezotolerans (strain WP3 / JCM 13877).